We begin with the raw amino-acid sequence, 88 residues long: Small ribosomal subunit protein uS17 (88 aa).

It belongs to the universal ribosomal protein uS17 family. In terms of assembly, part of the 30S ribosomal subunit.

One of the primary rRNA binding proteins, it binds specifically to the 5'-end of 16S ribosomal RNA. The polypeptide is Small ribosomal subunit protein uS17 (Levilactobacillus brevis (strain ATCC 367 / BCRC 12310 / CIP 105137 / JCM 1170 / LMG 11437 / NCIMB 947 / NCTC 947) (Lactobacillus brevis)).